We begin with the raw amino-acid sequence, 1020 residues long: Sodium/potassium-transporting ATPase subunit alpha-2 (1020 aa).

Residues 1–5 (MGRGA) constitute a propeptide that is removed on maturation. Positions 1–31 (MGRGAGREYSPAATTAENGGGKKKQKEKELD) are disordered. The Cytoplasmic portion of the chain corresponds to 6 to 85 (GREYSPAATT…NALTPPPTTP (80 aa)). Serine 10 bears the Phosphoserine mark. The interval 80–82 (PPP) is interaction with phosphoinositide-3 kinase. Residues 86 to 106 (EWVKFCRQLFGGFSILLWIGA) traverse the membrane as a helical segment. The Extracellular segment spans residues 107-129 (ILCFLAYGIQAAMEDEPSNDNLY). The chain crosses the membrane as a helical span at residues 130 to 150 (LGVVLAAVVIVTGCFSYYQEA). Over 151-286 (KSSKIMDSFK…VGRTPIAMEI (136 aa)) the chain is Cytoplasmic. The segment covering 212–227 (DNSSLTGESEPQTRSP) has biased composition (polar residues). A disordered region spans residues 212–231 (DNSSLTGESEPQTRSPEFTH). A helical transmembrane segment spans residues 287 to 306 (EHFIQLITGVAVFLGVSFFV). The Extracellular portion of the chain corresponds to 307-318 (LSLILGYSWLEA). Residues 319 to 336 (VIFLIGIIVANVPEGLLA) form a helical membrane-spanning segment. The Cytoplasmic segment spans residues 337–769 (TVTVCLTLTA…EEGRLIFDNL (433 aa)). Aspartate 374 acts as the 4-aspartylphosphate intermediate in catalysis. Serine 439, serine 450, serine 496, and serine 559 each carry phosphoserine. Threonine 570 carries the post-translational modification Phosphothreonine. Residues serine 587 and serine 672 each carry the phosphoserine modification. Residues aspartate 714 and aspartate 718 each contribute to the Mg(2+) site. Residues 770–789 (KKSIAYTLTSNIPEITPFLL) form a helical membrane-spanning segment. Residues 790-799 (FIIANIPLPL) are Extracellular-facing. Residues 800–820 (GTVTILCIDLGTDMVPAISLA) traverse the membrane as a helical segment. Residues 821 to 840 (YEAAESDIMKRQPRNSQTDK) lie on the Cytoplasmic side of the membrane. The residue at position 826 (serine 826) is a Phosphoserine. The chain crosses the membrane as a helical span at residues 841–863 (LVNERLISMAYGQIGMIQALGGF). The Extracellular portion of the chain corresponds to 864-915 (FTYFVILAENGFLPSRLLGIRLDWDDRTMNDLEDSYGQEWTYEQRKVVEFTC). A helical membrane pass occupies residues 916–935 (HTAFFASIVVVQWADLIICK). Residues 936-948 (TRRNSVFQQGMKN) are Cytoplasmic-facing. Phosphoserine; by PKA is present on serine 940. A helical transmembrane segment spans residues 949–967 (KILIFGLLEETALAAFLSY). Over 968-982 (CPGMGVALRMYPLKV) the chain is Extracellular. The helical transmembrane segment at 983-1003 (TWWFCAFPYSLLIFIYDEVRK) threads the bilayer. The Cytoplasmic portion of the chain corresponds to 1004-1020 (LILRRYPGGWVEKETYY).

The protein belongs to the cation transport ATPase (P-type) (TC 3.A.3) family. Type IIC subfamily. As to quaternary structure, the sodium/potassium-transporting ATPase is composed of a catalytic alpha subunit, an auxiliary non-catalytic beta subunit and an additional regulatory subunit. Interacts with regulatory subunit FXYD1.

Its subcellular location is the membrane. It is found in the cell membrane. The catalysed reaction is K(+)(out) + Na(+)(in) + ATP + H2O = K(+)(in) + Na(+)(out) + ADP + phosphate + H(+). Its function is as follows. This is the catalytic component of the active enzyme, which catalyzes the hydrolysis of ATP coupled with the exchange of sodium and potassium ions across the plasma membrane. This action creates the electrochemical gradient of sodium and potassium, providing the energy for active transport of various nutrients. The polypeptide is Sodium/potassium-transporting ATPase subunit alpha-2 (ATP1A2) (Homo sapiens (Human)).